The primary structure comprises 146 residues: Endothelial differentiation-related factor 1 homolog (146 aa).

The disordered stretch occupies residues 13–53; that stretch reads RKKGSAAQSKSKQAVTAAQRKGEAVETSKKWAAGQNKQHVV. Over residues 17–31 the composition is skewed to low complexity; the sequence is SAAQSKSKQAVTAAQ. A compositionally biased stretch (basic and acidic residues) spans 32–41; it reads RKGEAVETSK. In terms of domain architecture, HTH cro/C1-type spans 80–134; sequence IQQGRQNKGLTQKDLATKINEKPQIIAEYECGKAIPNNQVMGKIERAIGLKLRGK. The segment at residues 91–110 is a DNA-binding region (H-T-H motif); that stretch reads QKDLATKINEKPQIIAEYEC.

The protein localises to the nucleus. In terms of biological role, probable transcriptional coactivator. This chain is Endothelial differentiation-related factor 1 homolog (edf1), found in Danio rerio (Zebrafish).